Reading from the N-terminus, the 912-residue chain is Metabotropic glutamate receptor 4 (912 aa).

An N-terminal signal peptide occupies residues 1–32 (MPGKSGLGWWWARLPLCLLLSLYGPWMPSSLG). Topologically, residues 33–586 (KPKGHPHMNS…PIIKLEWDSP (554 aa)) are extracellular. Cysteine 67 and cysteine 109 are oxidised to a cystine. N-linked (GlcNAc...) asparagine glycosylation is present at asparagine 98. L-glutamate is bound by residues serine 159, 180-182 (AST), and tyrosine 230. 7 cysteine pairs are disulfide-bonded: cysteine 249/cysteine 538, cysteine 372/cysteine 388, cysteine 428/cysteine 435, cysteine 520/cysteine 539, cysteine 524/cysteine 542, cysteine 545/cysteine 557, and cysteine 560/cysteine 573. A glycan (N-linked (GlcNAc...) asparagine) is linked at asparagine 301. Aspartate 312 is a binding site for L-glutamate. Lysine 405 serves as a coordination point for L-glutamate. N-linked (GlcNAc...) asparagine glycosylation is found at asparagine 454 and asparagine 484. Residue asparagine 569 is glycosylated (N-linked (GlcNAc...) asparagine). A helical transmembrane segment spans residues 587–607 (WAVLPLFLAVVGIAATLFVVI). Topologically, residues 608 to 624 (TFVRYNDTPIVKASGRE) are cytoplasmic. The chain crosses the membrane as a helical span at residues 625-645 (LSYVLLAGIFLCYATTFLMIA). At 646–653 (EPDLGTCS) the chain is on the extracellular side. A helical transmembrane segment spans residues 654 to 671 (LRRIFLGLGMSISYAALL). Residues 672–699 (TKTNRIYRIFEQGKRSVSAPRFISPASQ) are Cytoplasmic-facing. Residues 700 to 720 (LAITFSLISLQLLGICVWFVV) form a helical membrane-spanning segment. Topologically, residues 721-751 (DPSHSVVDFQDQRTLDPRFARGVLKCDISDL) are extracellular. The chain crosses the membrane as a helical span at residues 752–772 (SLICLLGYSMLLMVTCTVYAI). Over 773–786 (KTRGVPETFNEAKP) the chain is Cytoplasmic. Residues 787–807 (IGFTMYTTCIVWLAFIPIFFG) traverse the membrane as a helical segment. Residues 808 to 826 (TSQSADKLYIQTTTLTVSV) are Extracellular-facing. The helical transmembrane segment at 827-847 (SLSASVSLGMLYMPKVYIILF) threads the bilayer. Over 848–912 (HPEQNVPKRK…TYVTYTNHAI (65 aa)) the chain is Cytoplasmic.

The protein belongs to the G-protein coupled receptor 3 family. In terms of assembly, interacts with PICK1.

The protein resides in the cell membrane. Functionally, G-protein coupled receptor for glutamate. Ligand binding causes a conformation change that triggers signaling via guanine nucleotide-binding proteins (G proteins) and modulates the activity of down-stream effectors. Signaling inhibits adenylate cyclase activity. The polypeptide is Metabotropic glutamate receptor 4 (GRM4) (Macaca fascicularis (Crab-eating macaque)).